Here is a 126-residue protein sequence, read N- to C-terminus: Glycine cleavage system H protein (126 aa).

A Lipoyl-binding domain is found at 22–104 (VAYVGITDYA…YGEGWLIKMK (83 aa)). K63 carries the N6-lipoyllysine modification.

This sequence belongs to the GcvH family. In terms of assembly, the glycine cleavage system is composed of four proteins: P, T, L and H. (R)-lipoate is required as a cofactor.

The glycine cleavage system catalyzes the degradation of glycine. The H protein shuttles the methylamine group of glycine from the P protein to the T protein. The polypeptide is Glycine cleavage system H protein (Bacteroides fragilis (strain ATCC 25285 / DSM 2151 / CCUG 4856 / JCM 11019 / LMG 10263 / NCTC 9343 / Onslow / VPI 2553 / EN-2)).